A 2205-amino-acid polypeptide reads, in one-letter code: MNVQVAVRVRPFNSREKERNAELIVQMNNKSTILTRPSALRANPLAAPTADDEKSFSFDYSYWSYDSNDPHFASQSTVYNDLGKEVLKNAWDGFNCSIFAYGQTGSGKSYSMMGYGEEKGIIPLICEELFQRIQSTPSNSNEQTIYKTTVSYMEIYNEKVKDLLNPNNNKTGGLKVRNNPSTGPYVEDLSKLAVKSFSEIDMLMDEGSKARTVASTNMNATSSRSHAVFTIVFTQSKIDKTRGTAIDRVSKISLVDLAGSERANSTGATGVRLKEGANINKSLSTLGKVISALAENSTSKKAVFVPYRDSVLTYLLKETLGGNSKTIMIAAISPADINYEESLSTLRYADSAKKIKTVAVVNEDAQSKLIRELQGEVERLRAMMDQGGQYHANDSKLMNSDYDETVSTLNEKIEQYEKLMAELNKSWEEKLSEAEAIREDRMAALKDMGVAIKVVSSIPHLINLNEDPLMSESLIYYVKEGKTRIGRSDSEIPQDIILNGLNIHKEHCIFENINGKVIISPSNNFMNNNNNKENSSSTTPTSSKSPSKPKSEKEKENNNDDDDGEKKLDRSYIYVNGVEINKPTILTTGNRVILGNNHIFRFNNPEEAIKIARERNQTTGGIVSSTKSPVDQIMDYDFALNELASIQGTLAMSKHINDKQEYKKQMRALYDQIRLQLENDCDPEVKEQREKLALLAFRRWRSKVHRSKLLNKISFIILSLNEANAISSTLNKKINLSLKLYSVFPEPDQISDNIEPEIDWRKTQILIKATDSSTGESTLVTDQDFVDRIYLMRELYQNDGRLDTELPEDPFQFTFTKDSLIGVSHVYLKNTLYLVESNRPVPILDENGNQKGYLNLLVSSSSTDITESERGLYLENPSNNKSLLLGKNLEITIGFEGFSEFIDENKFSDVFIKFNFPNQNGTIVDTFLTEPQPISAFIDQKRIVITSLTESLINLLQTQYVSFEIRGHKKSKQQPKLTSSSSSASTTSSSSKNQPMLENFEFLATLNILESEKNTGTDDQYKPVHILEDPDVYNTHLPSVTFRLKKDKTNRQILFKVIKNESNSIIKECKSARISDIKIFGKRDNPLLSSSATPNTPNTPNNSRIAGIQNTPGTPMTPYSNQTNNQQSSSSQPPLPQQQGTPYNPQSNNPNVISNAPPTPNSNLLKDLSLAANVQTSSSSSSSSLNVLLNNQQQQQQSQQSQQQQQQQSQQSSETSSTTNSITNSASNSSLSLLVNNQTTNSNNSGGNIFEIPVLSCTDDSVLLLWKTNDPSFIFNQKTRKGDKILFKLTFDLLIQGFPDVVSISKDIAIKILSSESMPSATMPDGTSSSSMSNLLDKFKTHFKGESILSEPSIHAGSVFSINLTKSRQQEHQNRIGEMIDAHQENILKLGYAMKMEKLRQELDLREKLTNLKEKTIDSTNTDDVNAANGVAESSNSSTIDVEEIVKKMLLMNSTHQQQQQNFSSPSSTSPTLVNGESSPKSGRSSNTTSSSSGGGGGGGRKRSSTIVEVKVKEVPSSALLKEDETSGYLKKKSAFKEEWKPRWFVFKKPYLYYSHNQKDTHKLKKIDLTNSSVAITQDEVPFGFAIIQLRRVWLLQANSVEDRDKWVQTLDPLRKVTELKDEELRTAKQQIEKSSSQLDQIKSQLQTGQQIVLAKQKEIEELTNTISQLQLEKEINTQQFDGLRDEIQNRDEELEQYKSQQSQKINQLSGQVNKLENVTQEKELTIGSLSSTLNNTNQIIELINEQSKSYKNVAEMEIESLRDETTQLRETSQLLANRLKECRSSIQSAESLLSERDLEITQLKALLTQQEESSGITSLNLKNLQSDQTMKQGQIDILSKTVQQSTATIQNISSQLDSTTKASDSKDEQITSINSAYKDESDRLKDQTTQLNSLTTNLRQQMRSLEQTHLQQKETSASDQKTLLLLLHDMEQGLTRASQTITDQSAQVTVLKKQLEDSKKSNEQLPTVEKQLSLMKDRLIQSENQLIDRECENTILSDKLKLWEEEIKIKDSKLSLLENNVKEVRAEYANGMAFSREFSQHHTDSGSISGKFNRRSKQISAEEQMETLRESSIAHQSHNAFLNSQIQRLETEMRTQEKVYSDTIQRIKKDLQQRNQQNIAFMKHQVGDEIVKKMEDVTASMEILKKKYFVSLVVAAKLQNAMMGNICNVDAYELYEQSVVEHILDQDQWPNWIAQTISTQNKHL.

Residues 2 to 355 (NVQVAVRVRP…LRYADSAKKI (354 aa)) form the Kinesin motor domain. 102–109 (GQTGSGKS) contacts ATP. A coiled-coil region spans residues 362–448 (NEDAQSKLIR…EDRMAALKDM (87 aa)). Residues 483–595 (TRIGRSDSEI…LTTGNRVILG (113 aa)) enclose the FHA domain. The segment covering 525 to 548 (FMNNNNNKENSSSTTPTSSKSPSK) has biased composition (low complexity). Disordered regions lie at residues 525 to 568 (FMNN…EKKL), 971 to 993 (SKQQ…SSKN), 1084 to 1226 (DNPL…TNSA), and 1455 to 1508 (THQQ…STIV). A compositionally biased stretch (basic and acidic residues) spans 549-568 (PKSEKEKENNNDDDDGEKKL). Low complexity-rich tracts occupy residues 978–991 (TSSS…SSSS), 1089–1103 (SSSA…PNNS), and 1117–1142 (TPYS…QGTP). Polar residues predominate over residues 1143–1164 (YNPQSNNPNVISNAPPTPNSNL). Low complexity-rich tracts occupy residues 1169 to 1226 (SLAA…TNSA) and 1455 to 1492 (THQQ…TSSS). Residues 1523–1616 (EDETSGYLKK…WVQTLDPLRK (94 aa)) enclose the PH domain. Coiled coils occupy residues 1879–1918 (KDES…ETSA), 1946–2034 (SAQV…NGMA), and 2075–2149 (AHQS…KKKY).

The protein belongs to the TRAFAC class myosin-kinesin ATPase superfamily. Kinesin family. Unc-104 subfamily. Homodimer.

The protein resides in the cytoplasm. Its subcellular location is the cytoskeleton. The protein localises to the cytoplasmic vesicle membrane. Its function is as follows. Microtubule-associated force-producing protein that plays a role in organelle transport. Its motor activity is directed toward the microtubule's plus end. Transports cytoplasmic vesicles and particularly phosphatidylinositol 4,5-bisphosphate-containing liposomes along microtubules. The polypeptide is Kinesin-related protein 1 (kif1) (Dictyostelium discoideum (Social amoeba)).